The primary structure comprises 335 residues: Peflin (335 aa).

Residues 23 to 37 (AMEETRREFEKEKQR) are compositionally biased toward basic and acidic residues. The segment at 23-92 (AMEETRREFE…SPRHTKTPVD (70 aa)) is disordered. The span at 43 to 53 (VTQAQTPNTRV) shows a compositional bias: polar residues. EF-hand domains follow at residues 144 to 192 (KVAP…DDNS), 198 to 223 (SVDA…IALY), 224 to 259 (KRVK…LGYL), 260 to 300 (IPFE…LMRL), and 301 to 332 (TKLF…LGRF). Residues Asp170, Arg176, and Glu181 each contribute to the Ca(2+) site. Ca(2+) is bound by residues Asp237, Asn239, Ser241, Thr243, and Glu248.

In terms of assembly, homodimer.

It localises to the cytoplasm. The protein resides in the nucleus. The protein localises to the bud tip. Its subcellular location is the bud neck. Calcium-binding protein that is required for polar bud growth and cell wall abscission. Can also bind zinc ions. This Saccharomyces cerevisiae (strain ATCC 204508 / S288c) (Baker's yeast) protein is Peflin (PEF1).